A 115-amino-acid chain; its full sequence is U3-lycotoxin-Ls1k (115 aa).

An N-terminal signal peptide occupies residues 1–20 (MKFVLLFGVLLVALFSYSSA). Residues 21–44 (EMLDDFGQADEDELLSLIEKEEAR) constitute a propeptide that is removed on maturation. Disulfide bonds link C48–C63, C55–C72, C62–C87, and C74–C85.

It belongs to the neurotoxin 19 (CSTX) family. 01 subfamily. Expressed by the venom gland.

It is found in the secreted. This chain is U3-lycotoxin-Ls1k, found in Lycosa singoriensis (Wolf spider).